A 436-amino-acid polypeptide reads, in one-letter code: MSSEKNYLNENYKSFFDDSLSVTDPELHKAISDELKRQQQHIELIASENIVSQAVLEAQGSVLTNKYAEGYPGKRYYNGCEHVDVAENLAIERLKKIFDCKFANAQPHSGAQANGAVFLALLNPGDTFMGMSLNSGGHITHGLKISMSGKWFNPIGYDVDKESELIDYDNVEKLALEHKPKLIICGGSAYSRVIDFKRFREIADKVGAYLMVDMAHFSGLVAGKGYPNPCEHAHVVTSTTHKVFRSARGGIILTNHEDLAKKFNTAVFPGYQGGPLMHVIAGKAAGFLEALRPDFKDYIKSVLANAKILSETLKNNGFKIYSGGTDTHLMLVDLRPFNVKGNAAAESLSNANITCNKNGIPFDSEKPMITSGIRLGTQAATTRGFGLKEFEKVGELITKVVKGLSENPEDNGKIEEEVRNEVIDLTSNFPIYKNLK.

Residues leucine 133 and glycine 137 to isoleucine 139 each bind (6S)-5,6,7,8-tetrahydrofolate. N6-(pyridoxal phosphate)lysine is present on lysine 242.

The protein belongs to the SHMT family. Homodimer. Pyridoxal 5'-phosphate is required as a cofactor.

The protein resides in the cytoplasm. It carries out the reaction (6R)-5,10-methylene-5,6,7,8-tetrahydrofolate + glycine + H2O = (6S)-5,6,7,8-tetrahydrofolate + L-serine. The protein operates within one-carbon metabolism; tetrahydrofolate interconversion. Its pathway is amino-acid biosynthesis; glycine biosynthesis; glycine from L-serine: step 1/1. Catalyzes the reversible interconversion of serine and glycine with tetrahydrofolate (THF) serving as the one-carbon carrier. This reaction serves as the major source of one-carbon groups required for the biosynthesis of purines, thymidylate, methionine, and other important biomolecules. Also exhibits THF-independent aldolase activity toward beta-hydroxyamino acids, producing glycine and aldehydes, via a retro-aldol mechanism. The protein is Serine hydroxymethyltransferase of Pelagibacter ubique (strain HTCC1062).